We begin with the raw amino-acid sequence, 198 residues long: MESNKMVVGVLLIAAFALPALALFERDVITHETIEAVLKKSTPNSNTMLQEDAINALTGKTLISQTILEETLLKNGVVGGSIPCGESCVYIPCISSLLGCSCKSKVCYKNSLALPTLEKDVITPEALEAVLKSNGGAIVNTKTIISNAIFEETLLNNANHVLGGIPCAESCVYIPCLTSAIGCSCKSKVCYRNSLALN.

Residues 1–22 (MESNKMVVGVLLIAAFALPALA) form the signal peptide. The propeptide occupies 23–79 (LFERDVITHETIEAVLKKSTPNSNTMLQEDAINALTGKTLISQTILEETLLKNGVVG). Disulfide bonds link C84–C100, C88–C102, and C93–C107. Residues 111–163 (SLALPTLEKDVITPEALEAVLKSNGGAIVNTKTIISNAIFEETLLNNANHVLG) constitute a propeptide that is removed on maturation. Cystine bridges form between C167-C183, C171-C185, and C176-C190. A propeptide spanning residues 194-198 (SLALN) is cleaved from the precursor.

The protein belongs to the cyclotide family. Bracelet subfamily. In terms of processing, these are cyclic peptides. Post-translationally, the mature peptides contain 3 disulfide bonds each.

Functionally, probably participates in a plant defense mechanism. This is Cyclotides mra4/mra5 from Melicytus ramiflorus (Whitey wood).